We begin with the raw amino-acid sequence, 224 residues long: Orotidine 5'-phosphate decarboxylase (224 aa).

Substrate-binding positions include aspartate 10, lysine 32, 59-68, threonine 115, arginine 175, glutamine 184, glycine 204, and arginine 205; that span reads DLKLHDIPNT. Lysine 61 (proton donor) is an active-site residue.

Belongs to the OMP decarboxylase family. Type 1 subfamily. As to quaternary structure, homodimer.

The enzyme catalyses orotidine 5'-phosphate + H(+) = UMP + CO2. Its pathway is pyrimidine metabolism; UMP biosynthesis via de novo pathway; UMP from orotate: step 2/2. Catalyzes the decarboxylation of orotidine 5'-monophosphate (OMP) to uridine 5'-monophosphate (UMP). This is Orotidine 5'-phosphate decarboxylase from Erythrobacter litoralis (strain HTCC2594).